The following is a 195-amino-acid chain: Imidazoleglycerol-phosphate dehydratase (195 aa).

Belongs to the imidazoleglycerol-phosphate dehydratase family.

It is found in the cytoplasm. The catalysed reaction is D-erythro-1-(imidazol-4-yl)glycerol 3-phosphate = 3-(imidazol-4-yl)-2-oxopropyl phosphate + H2O. The protein operates within amino-acid biosynthesis; L-histidine biosynthesis; L-histidine from 5-phospho-alpha-D-ribose 1-diphosphate: step 6/9. The chain is Imidazoleglycerol-phosphate dehydratase from Leuconostoc mesenteroides subsp. mesenteroides (strain ATCC 8293 / DSM 20343 / BCRC 11652 / CCM 1803 / JCM 6124 / NCDO 523 / NBRC 100496 / NCIMB 8023 / NCTC 12954 / NRRL B-1118 / 37Y).